Reading from the N-terminus, the 174-residue chain is MQQALFGGGCFWCVEAVFLQIRGVEKVTSGYAGGHTTHPTYEQVCQGDTQHAEVVLIDFDEQQVTYSQLLDVFFATHDPTTLNRQGNDIGTQYRSVIYYFNEEQKQAAEHTIQTLKDDDLDIVTELSPAPTFYPAEDYHQNYYEKNPSQGYCNFAIPPKLLKLYSKFQHLMKDQ.

The active site involves C10.

The protein belongs to the MsrA Met sulfoxide reductase family.

It carries out the reaction L-methionyl-[protein] + [thioredoxin]-disulfide + H2O = L-methionyl-(S)-S-oxide-[protein] + [thioredoxin]-dithiol. The catalysed reaction is [thioredoxin]-disulfide + L-methionine + H2O = L-methionine (S)-S-oxide + [thioredoxin]-dithiol. Its function is as follows. Has an important function as a repair enzyme for proteins that have been inactivated by oxidation. Catalyzes the reversible oxidation-reduction of methionine sulfoxide in proteins to methionine. The polypeptide is Peptide methionine sulfoxide reductase MsrA (Acinetobacter baumannii (strain SDF)).